A 536-amino-acid polypeptide reads, in one-letter code: L-aspartate oxidase 2 (536 aa).

FAD contacts are provided by residues 22-25 (EGLA) and 51-58 (SSYWAQGG). Residue R284 is the Proton donor/acceptor of the active site. FAD-binding positions include E369 and 385–386 (SL).

Belongs to the FAD-dependent oxidoreductase 2 family. NadB subfamily. FAD is required as a cofactor.

It is found in the cytoplasm. It carries out the reaction L-aspartate + O2 = iminosuccinate + H2O2. The protein operates within cofactor biosynthesis; NAD(+) biosynthesis; iminoaspartate from L-aspartate (oxidase route): step 1/1. Functionally, catalyzes the oxidation of L-aspartate to iminoaspartate, the first step in the de novo biosynthesis of NAD(+). This is L-aspartate oxidase 2 (nadB2) from Ralstonia nicotianae (strain ATCC BAA-1114 / GMI1000) (Ralstonia solanacearum).